We begin with the raw amino-acid sequence, 348 residues long: Ileal sodium/bile acid cotransporter (348 aa).

The Extracellular segment spans residues 1-28 (MDNSSICNPNATICEGDSCIAPESNFNA). N-linked (GlcNAc...) asparagine glycosylation is found at N3 and N10. Residues 29 to 49 (ILSVVMSTVLTILLALVMFSM) traverse the membrane as a helical segment. Topologically, residues 50 to 81 (GCNVELHKFLGHLRRPWGIVVGFLCQFGIMPL) are cytoplasmic. The helical transmembrane segment at 82-102 (TGFVLSVAFGILPVQAVVVLI) threads the bilayer. Residues 103-126 (QGCCPGGTASNILAYWVDGDMDLS) are Extracellular-facing. Residues 127–147 (VSMTTCSTLLALGMMPLCLFI) form a helical membrane-spanning segment. Topologically, residues 148–157 (YTKMWVDSGT) are cytoplasmic. Residues 158–178 (IVIPYDSIGTSLVALVIPVSI) form a helical membrane-spanning segment. At 179–195 (GMYVNHKWPQKAKIILK) the chain is on the extracellular side. A helical transmembrane segment spans residues 196–216 (IGSIAGAILIVLIAVVGGILY). Over 217–224 (QSAWTIEP) the chain is Cytoplasmic. A helical transmembrane segment spans residues 225–245 (KLWIIGTIYPIAGYGLGFFLA). At 246 to 284 (RIAGQPWYRCRTVALETGLQNTQLCSTIVQLSFSPEDLN) the chain is on the extracellular side. A helical membrane pass occupies residues 285-305 (LVFTFPLIYSIFQIAFAAILL). At 306–348 (GAYVAYKKCHGKNNTELQEKTDNEMEPRSSFQETNKGFQPDEK) the chain is on the cytoplasmic side. The segment covering 322–332 (LQEKTDNEMEP) has biased composition (basic and acidic residues). The interval 322-348 (LQEKTDNEMEPRSSFQETNKGFQPDEK) is disordered. A Phosphoserine modification is found at S335.

Belongs to the bile acid:sodium symporter (BASS) (TC 2.A.28) family. As to quaternary structure, monomer and homodimer. As to expression, mainly expressed in ileum and kidney, lower expression in jejunum.

It localises to the membrane. The catalysed reaction is taurocholate(out) + 2 Na(+)(out) = taurocholate(in) + 2 Na(+)(in). The enzyme catalyses cholate(out) + 2 Na(+)(out) = cholate(in) + 2 Na(+)(in). It carries out the reaction taurochenodeoxycholate(out) + 2 Na(+)(out) = taurochenodeoxycholate(in) + 2 Na(+)(in). It catalyses the reaction tauroursodeoxycholate(out) + 2 Na(+)(out) = tauroursodeoxycholate(in) + 2 Na(+)(in). The catalysed reaction is glycocholate(out) + 2 Na(+)(out) = glycocholate(in) + 2 Na(+)(in). The enzyme catalyses tauronorcholate(out) + 2 Na(+)(out) = tauronorcholate(in) + 2 Na(+)(in). It carries out the reaction tauroallocholate(out) + 2 Na(+)(out) = tauroallocholate(in) + 2 Na(+)(in). It catalyses the reaction taurodeoxycholate(out) + 2 Na(+)(out) = taurodeoxycholate(in) + 2 Na(+)(in). The catalysed reaction is tauro-beta-muricholate(out) + 2 Na(+)(out) = tauro-beta-muricholate(in) + 2 Na(+)(in). Its function is as follows. Plays a critical role in the sodium-dependent reabsorption of bile acids from the lumen of the small intestine. Transports various bile acids, unconjugated or conjugated, such as cholate and taurocholate. Also responsible for bile acid transport in the renal proximal tubules, a salvage mechanism that helps conserve bile acids. Works collaboratively with the Na(+)-taurocholate cotransporting polypeptide (NTCP), the organic solute transporter (OST), and the bile salt export pump (BSEP), to ensure efficacious biological recycling of bile acids during enterohepatic circulation. This is Ileal sodium/bile acid cotransporter (SLC10A2) from Cricetulus griseus (Chinese hamster).